Consider the following 198-residue polypeptide: Nucleoid occlusion factor SlmA (198 aa).

Residues 10 to 70 (NRREEILQSL…SLIEFIEDSL (61 aa)) enclose the HTH tetR-type domain. Positions 33-52 (TTAKLAASVGVSEAALYRHF) form a DNA-binding region, H-T-H motif. The stretch at 117-144 (EQDRLQGRINQLFERIEAQLRQVLREKR) forms a coiled coil.

Belongs to the nucleoid occlusion factor SlmA family. Homodimer. Interacts with FtsZ.

Its subcellular location is the cytoplasm. It is found in the nucleoid. Its function is as follows. Required for nucleoid occlusion (NO) phenomenon, which prevents Z-ring formation and cell division over the nucleoid. Acts as a DNA-associated cell division inhibitor that binds simultaneously chromosomal DNA and FtsZ, and disrupts the assembly of FtsZ polymers. SlmA-DNA-binding sequences (SBS) are dispersed on non-Ter regions of the chromosome, preventing FtsZ polymerization at these regions. The protein is Nucleoid occlusion factor SlmA of Salmonella dublin (strain CT_02021853).